We begin with the raw amino-acid sequence, 156 residues long: Small ribosomal subunit protein uS7 (156 aa).

This sequence belongs to the universal ribosomal protein uS7 family. In terms of assembly, part of the 30S ribosomal subunit. Contacts proteins S9 and S11.

In terms of biological role, one of the primary rRNA binding proteins, it binds directly to 16S rRNA where it nucleates assembly of the head domain of the 30S subunit. Is located at the subunit interface close to the decoding center, probably blocks exit of the E-site tRNA. This is Small ribosomal subunit protein uS7 from Salmonella choleraesuis (strain SC-B67).